We begin with the raw amino-acid sequence, 235 residues long: MIKTLPAFWAVIPAAGVGARMAADRPKQYLQLGGQTLLEHSLDCFLGHPTLKGVVVSIAADDPYWPGLRCASDPRIQRASGGRERADSVLNALLLLHAQDAADTDWVLVHDAARPNLARTDLDRLLSELADDPVGGLLAVPARDTLKRADANGRVSATVDRSTIWQAYTPQMFRLGALHRALAECLVSDVVVTDEASAIEWSGQAPRLIEGRSDNIKVTRPEDLEWLRQRWAGRR.

The protein belongs to the IspD/TarI cytidylyltransferase family. IspD subfamily.

The enzyme catalyses 2-C-methyl-D-erythritol 4-phosphate + CTP + H(+) = 4-CDP-2-C-methyl-D-erythritol + diphosphate. It participates in isoprenoid biosynthesis; isopentenyl diphosphate biosynthesis via DXP pathway; isopentenyl diphosphate from 1-deoxy-D-xylulose 5-phosphate: step 2/6. Its function is as follows. Catalyzes the formation of 4-diphosphocytidyl-2-C-methyl-D-erythritol from CTP and 2-C-methyl-D-erythritol 4-phosphate (MEP). This Pseudomonas putida (strain W619) protein is 2-C-methyl-D-erythritol 4-phosphate cytidylyltransferase.